A 154-amino-acid polypeptide reads, in one-letter code: Myoglobin (154 aa).

In terms of domain architecture, Globin spans 2 to 148; it reads GLSDDEWNHV…FRNDMASKYK (147 aa). Histidine 65 is a nitrite binding site. Histidine 65 serves as a coordination point for O2. Position 94 (histidine 94) interacts with heme b.

This sequence belongs to the globin family. In terms of assembly, monomeric.

The protein resides in the cytoplasm. Its subcellular location is the sarcoplasm. It catalyses the reaction Fe(III)-heme b-[protein] + nitric oxide + H2O = Fe(II)-heme b-[protein] + nitrite + 2 H(+). The catalysed reaction is H2O2 + AH2 = A + 2 H2O. In terms of biological role, monomeric heme protein which primary function is to store oxygen and facilitate its diffusion within muscle tissues. Reversibly binds oxygen through a pentacoordinated heme iron and enables its timely and efficient release as needed during periods of heightened demand. Depending on the oxidative conditions of tissues and cells, and in addition to its ability to bind oxygen, it also has a nitrite reductase activity whereby it regulates the production of bioactive nitric oxide. Under stress conditions, like hypoxia and anoxia, it also protects cells against reactive oxygen species thanks to its pseudoperoxidase activity. The polypeptide is Myoglobin (MB) (Chelonia mydas (Green sea-turtle)).